Here is a 75-residue protein sequence, read N- to C-terminus: 8.9 kDa basic protein (75 aa).

The chain is 8.9 kDa basic protein (P8.9) from Orgyia pseudotsugata (Douglas-fir tussock moth).